Consider the following 458-residue polypeptide: uncharacterized protein (458 aa).

The next 12 helical transmembrane spans lie at 26–46 (LIAI…KSIH), 47–67 (FAGP…FLIM), 95–115 (AAFI…MADL), 125–145 (WLPG…LLIM), 160–180 (FALI…VMIF), 208–228 (GFIL…LVGL), 251–271 (VLLF…WDII), 278–298 (FVQV…NFVV), 342–362 (ALFF…IMPE), 365–385 (FTLI…ITVI), 409–429 (PFTN…LALA), and 432–452 (TRVS…IYKV).

This sequence belongs to the amino acid-polyamine-organocation (APC) superfamily.

Its subcellular location is the cell membrane. Its function is as follows. Probable amino-acid or metabolite transport protein. This is an uncharacterized protein from Bacillus subtilis (strain 168).